The sequence spans 394 residues: Elongation factor Tu (394 aa).

The tr-type G domain maps to 10-204 (KPHVNVGTIG…FLDSYIPEPE (195 aa)). The G1 stretch occupies residues 19–26 (GHVDHGKT). Residue 19-26 (GHVDHGKT) participates in GTP binding. T26 contributes to the Mg(2+) binding site. Residues 60-64 (GITIN) are G2. A G3 region spans residues 81 to 84 (DCPG). GTP contacts are provided by residues 81–85 (DCPGH) and 136–139 (NKCD). A G4 region spans residues 136-139 (NKCD). The G5 stretch occupies residues 174 to 176 (SAL).

It belongs to the TRAFAC class translation factor GTPase superfamily. Classic translation factor GTPase family. EF-Tu/EF-1A subfamily. Monomer.

It localises to the cytoplasm. The enzyme catalyses GTP + H2O = GDP + phosphate + H(+). In terms of biological role, GTP hydrolase that promotes the GTP-dependent binding of aminoacyl-tRNA to the A-site of ribosomes during protein biosynthesis. The polypeptide is Elongation factor Tu (Salmonella arizonae (strain ATCC BAA-731 / CDC346-86 / RSK2980)).